A 122-amino-acid polypeptide reads, in one-letter code: Small ribosomal subunit protein uS13 (122 aa).

The disordered stretch occupies residues 92–122; sequence HRNGLPVRGQRTHTNARTRKGKAKPIAGKKK. The segment covering 101-122 has biased composition (basic residues); sequence QRTHTNARTRKGKAKPIAGKKK.

This sequence belongs to the universal ribosomal protein uS13 family. In terms of assembly, part of the 30S ribosomal subunit. Forms a loose heterodimer with protein S19. Forms two bridges to the 50S subunit in the 70S ribosome.

Located at the top of the head of the 30S subunit, it contacts several helices of the 16S rRNA. In the 70S ribosome it contacts the 23S rRNA (bridge B1a) and protein L5 of the 50S subunit (bridge B1b), connecting the 2 subunits; these bridges are implicated in subunit movement. Contacts the tRNAs in the A and P-sites. In Erythrobacter litoralis (strain HTCC2594), this protein is Small ribosomal subunit protein uS13.